Reading from the N-terminus, the 353-residue chain is DNA integrity scanning protein DisA (353 aa).

The region spanning 6 to 144 is the DAC domain; the sequence is DKELMNILKI…GGIKYVLRDS (139 aa). Residues Gly-73, Leu-91, and 104 to 108 contribute to the ATP site; that span reads TRHRT.

It belongs to the DisA family. In terms of assembly, homooctamer. Mg(2+) is required as a cofactor.

It carries out the reaction 2 ATP = 3',3'-c-di-AMP + 2 diphosphate. Its function is as follows. Participates in a DNA-damage check-point that is active prior to asymmetric division when DNA is damaged. DisA forms globular foci that rapidly scan along the chromosomes during sporulation, searching for lesions. When a lesion is present, DisA pauses at the lesion site. This triggers a cellular response that culminates in a temporary block in sporulation initiation. In terms of biological role, also has diadenylate cyclase activity, catalyzing the condensation of 2 ATP molecules into cyclic di-AMP (c-di-AMP). c-di-AMP acts as a signaling molecule that couples DNA integrity with progression of sporulation. The rise in c-di-AMP level generated by DisA while scanning the chromosome, operates as a positive signal that advances sporulation; upon encountering a lesion, the DisA focus arrests at the damaged site and halts c-di-AMP synthesis. The polypeptide is DNA integrity scanning protein DisA (Clostridium botulinum (strain 657 / Type Ba4)).